A 159-amino-acid polypeptide reads, in one-letter code: Cytochrome c-type biogenesis protein CcmE (159 aa).

The Cytoplasmic portion of the chain corresponds to 1 to 8 (MHPIRKKR). A helical; Signal-anchor for type II membrane protein membrane pass occupies residues 9 to 29 (LTIVLFLVAGIAIAVGLTTYA). Over 30–159 (LRQNINLFYD…VEKAAETTAY (130 aa)) the chain is Periplasmic. Histidine 124 and tyrosine 128 together coordinate heme. Positions 135–159 (EALERSSKGQHKSADVEKAAETTAY) are disordered. Residues 136-159 (ALERSSKGQHKSADVEKAAETTAY) are compositionally biased toward basic and acidic residues.

This sequence belongs to the CcmE/CycJ family.

The protein localises to the cell inner membrane. Heme chaperone required for the biogenesis of c-type cytochromes. Transiently binds heme delivered by CcmC and transfers the heme to apo-cytochromes in a process facilitated by CcmF and CcmH. This chain is Cytochrome c-type biogenesis protein CcmE, found in Marinobacter nauticus (strain ATCC 700491 / DSM 11845 / VT8) (Marinobacter aquaeolei).